Here is a 229-residue protein sequence, read N- to C-terminus: Complex I assembly factor TMEM126B, mitochondrial (229 aa).

4 consecutive transmembrane segments (helical) span residues 71-91, 109-129, 140-160, and 198-218; these read IRGT…ANLV, LTTL…TDAL, VLRS…ALAF, and VPLL…YAVC.

In terms of assembly, part of the mitochondrial complex I assembly/MCIA complex that comprises at least the core subunits TMEM126B, NDUFAF1, ECSIT and ACAD9 and complement subunits such as COA1 and TMEM186. Associates with the intermediate 370 kDa subcomplex of incompletely assembled complex I. Interacts with TMEM70.

The protein resides in the mitochondrion membrane. In terms of biological role, as part of the MCIA complex, involved in the assembly of the mitochondrial complex I. Participates in constructing the membrane arm of complex I. The polypeptide is Complex I assembly factor TMEM126B, mitochondrial (Rattus norvegicus (Rat)).